A 290-amino-acid chain; its full sequence is MSNWLVDKLIPSIMRSESQKSSVPEGLWHKCPSCEAVLYRPELEKTLDVCPKCDHHMRINARTRLDIFLDEEGREELGADLEPVDRLKFRDSKKYKDRLSAAQKDTGEKDALIAMSGKLEGMPVVACAFEFSFMGGSMGAIVGERFVRAANVALEQRCPLICFSASGGARMQEALISLMQMAKTSAVLARLREEGIPFVSVLTDPVYGGVSASLAMLGDVIVGEPKALIGFAGPRVIEQTVREKLPEGFQRSEFLLEHGAIDMIVHRGELRPRLARLLSAFTHSPSPVSA.

Residues 27 to 290 (LWHKCPSCEA…FTHSPSPVSA (264 aa)) enclose the CoA carboxyltransferase N-terminal domain. Positions 31, 34, 50, and 53 each coordinate Zn(2+). A C4-type zinc finger spans residues 31-53 (CPSCEAVLYRPELEKTLDVCPKC).

It belongs to the AccD/PCCB family. As to quaternary structure, acetyl-CoA carboxylase is a heterohexamer composed of biotin carboxyl carrier protein (AccB), biotin carboxylase (AccC) and two subunits each of ACCase subunit alpha (AccA) and ACCase subunit beta (AccD). The cofactor is Zn(2+).

It localises to the cytoplasm. The enzyme catalyses N(6)-carboxybiotinyl-L-lysyl-[protein] + acetyl-CoA = N(6)-biotinyl-L-lysyl-[protein] + malonyl-CoA. It participates in lipid metabolism; malonyl-CoA biosynthesis; malonyl-CoA from acetyl-CoA: step 1/1. In terms of biological role, component of the acetyl coenzyme A carboxylase (ACC) complex. Biotin carboxylase (BC) catalyzes the carboxylation of biotin on its carrier protein (BCCP) and then the CO(2) group is transferred by the transcarboxylase to acetyl-CoA to form malonyl-CoA. In Pseudomonas paraeruginosa (strain DSM 24068 / PA7) (Pseudomonas aeruginosa (strain PA7)), this protein is Acetyl-coenzyme A carboxylase carboxyl transferase subunit beta.